A 69-amino-acid chain; its full sequence is VLIIAVLFLTACQLTTAETYSRGRQKHRARRSTDKNSKWTRECTDSGGACNSHDQCCNEFCSTATRTCI.

The first 17 residues, 1–17 (VLIIAVLFLTACQLTTA), serve as a signal peptide directing secretion. Residues 18–41 (ETYSRGRQKHRARRSTDKNSKWTR) constitute a propeptide that is removed on maturation. Disulfide bonds link Cys-43–Cys-57, Cys-50–Cys-61, and Cys-56–Cys-68.

Belongs to the conotoxin O1 superfamily. In terms of tissue distribution, expressed by the venom duct.

Its subcellular location is the secreted. In Conus ebraeus (Hebrew cone), this protein is Conotoxin Eb6.14 (E1).